A 3262-amino-acid chain; its full sequence is Striated muscle-specific serine/threonine-protein kinase (3262 aa).

Positions 1-33 (MQKARGTRGEDAGTRAPPSPGVPPKRAKVGAGR) are disordered. Arginine 33 is modified (omega-N-methylarginine). The 82-residue stretch at 45–126 (PVFLRPLKNA…GQASCEAVLT (82 aa)) folds into the Ig-like 1 domain. At serine 141 the chain carries Phosphoserine. Disordered stretches follow at residues 155 to 185 (RAFS…TSEE), 198 to 226 (EQEA…GPRH), 280 to 720 (GLHR…VSAG), and 814 to 875 (LAVR…APPT). Positions 158–185 (STPTGGSDTLVGTSLDTPPTSVTGTSEE) are enriched in polar residues. Residues 301-317 (PALPPPSKSALLPPPSP) are compositionally biased toward pro residues. Phosphoserine occurs at positions 368 and 375. Threonine 379 is subject to Phosphothreonine. Phosphoserine is present on residues serine 382 and serine 385. Residues 404 to 422 (ILDKLQFFEERRRSLERSD) show a composition bias toward basic and acidic residues. Serine 423 carries the post-translational modification Phosphoserine. Position 453 is a phosphothreonine (threonine 453). Serine 457, serine 463, serine 493, serine 511, and serine 531 each carry phosphoserine. A compositionally biased stretch (basic and acidic residues) spans 459–473 (EELRSPRGSVAERRR). Residues 510 to 522 (TSREELVRSHESL) are compositionally biased toward basic and acidic residues. Polar residues predominate over residues 543 to 552 (RPSTPKTSRA). A Phosphoserine modification is found at serine 554. Composition is skewed to basic and acidic residues over residues 624–638 (PESR…KREP) and 663–680 (EKNR…RGPE). An Ig-like 2 domain is found at 727–815 (PVFEIPLQNM…GQATCASSLA (89 aa)). A compositionally biased stretch (polar residues) spans 820–830 (GSTSPFSSPIT). Ig-like domains follow at residues 874-963 (PTFK…ARLE), 968-1062 (PESR…ARLT), and 1069-1157 (PLFT…AQLY). A disulfide bond links cysteine 994 and cysteine 1046. Residues serine 1133 and serine 1177 each carry the phosphoserine modification. The segment at 1162–1185 (RTAASGPSSKLEKMPSIPEEPEHG) is disordered. The 91-residue stretch at 1193 to 1283 (PDFLRPLQDL…AACYAHLYVT (91 aa)) folds into the Ig-like 6 domain. Residues 1290–1387 (PDGAPEVVAV…PSEPVQLLEH (98 aa)) enclose the Fibronectin type-III 1 domain. Ig-like domains are found at residues 1389–1485 (PPLE…VTLE) and 1490–1578 (PRFE…AELS). Cysteine 1413 and cysteine 1469 are joined by a disulfide. A Protein kinase 1 domain is found at 1606–1859 (YDIHQEIGRG…AEETLEHPWF (254 aa)). ATP contacts are provided by residues 1612-1620 (IGRGAFSYL) and lysine 1635. Aspartate 1724 serves as the catalytic Proton acceptor. The tract at residues 1913 to 2571 (MPRRQPPSGG…SQPNLSSSVQ (659 aa)) is disordered. Low complexity predominate over residues 1918–1927 (PPSGGLSSSS). Residues 1980-1990 (EQERTPSKDQE) show a composition bias toward basic and acidic residues. A phosphoserine mark is found at serine 1993, serine 2004, serine 2019, serine 2020, and serine 2042. Positions 2009 to 2019 (SPRRPELRRGS) are enriched in basic and acidic residues. Position 2060 is an asymmetric dimethylarginine; alternate (arginine 2060). At arginine 2060 the chain carries Omega-N-methylarginine; alternate. Residues 2069–2081 (AQRLQALRQRLLR) are compositionally biased toward low complexity. Phosphoserine occurs at positions 2114 and 2135. Position 2144 is an omega-N-methylarginine (arginine 2144). A compositionally biased stretch (polar residues) spans 2168–2179 (ESPSLSALSETQ). Serine 2182 and serine 2207 each carry phosphoserine. A compositionally biased stretch (polar residues) spans 2193 to 2207 (ITKSPEPSAVTSRDS). The segment covering 2208–2218 (PQPPEPQPVPE) has biased composition (pro residues). Residues 2219 to 2229 (KVPEPKPEPVR) are compositionally biased toward basic and acidic residues. The segment covering 2230 to 2268 (AAKPAQPPLALQMPTQPLTPYAQIMQSLQLSSPTLSPQD) has biased composition (low complexity). The span at 2337–2348 (FEAKFKRSRESP) shows a compositional bias: basic and acidic residues. The span at 2349–2358 (LSRGLRLLSR) shows a compositional bias: low complexity. Basic and acidic residues predominate over residues 2359-2375 (SRSEERGPFRGAEDDGI). Serine 2379 is subject to Phosphoserine. Residue threonine 2383 is modified to Phosphothreonine. Positions 2387–2398 (LVRRPERSRSVQ) are enriched in basic and acidic residues. Phosphoserine occurs at positions 2413, 2417, 2441, 2442, 2447, and 2451. Residues 2461-2487 (SSTLERLSSRLQRSGSSEDSGGASGRS) are compositionally biased toward low complexity. Residues 2513 to 2523 (QLGSQTGATTP) are compositionally biased toward polar residues. 2 positions are modified to phosphoserine: serine 2524 and serine 2527. Positions 2524–2543 (SAESLGSEASGTSGSSAPGE) are enriched in low complexity. Positions 2546-2557 (SRHRWGLSRLRK) are enriched in basic residues. Serine 2562 is subject to Phosphoserine. Positions 2562–2571 (SQPNLSSSVQ) are enriched in polar residues. Residues 2586–2676 (PPVFHIKLKD…GSITSSCTVA (91 aa)) form the Ig-like 9 domain. A disulfide bridge links cysteine 2608 with cysteine 2660. The Fibronectin type-III 2 domain maps to 2683 to 2777 (KLAPPEVPQT…KVFIRGTPDS (95 aa)). 3 disordered regions span residues 2756-2832 (RAGQ…MSAN), 2857-2899 (ATQQ…PAPS), and 2912-2960 (APPA…PQKP). Threonine 2774 is subject to Phosphothreonine. 2 stretches are compositionally biased toward low complexity: residues 2775-2789 (PDSP…RDAP) and 2803-2831 (PTSL…SMSA). Serine 2777 is modified (phosphoserine). Positions 2865–2968 (PPSIVVTPSE…KPYTFLEEKA (104 aa)) constitute a Fibronectin type-III 3 domain. Positions 2883–2899 (GTLTPTSSPQGVKPAPS) are enriched in polar residues. The segment covering 2913–2927 (PPAPQAPAPEPPPEP) has biased composition (pro residues). Residues 2943-2953 (SSPTPESTTLR) show a composition bias toward polar residues. The residue at position 2944 (serine 2944) is a Phosphoserine. The 268-residue stretch at 2946-3213 (TPESTTLRQG…LQDCLAHPWL (268 aa)) folds into the Protein kinase 2 domain. Catalysis depends on aspartate 3080, which acts as the Proton acceptor.

Belongs to the protein kinase superfamily. CAMK Ser/Thr protein kinase family. As to quaternary structure, interacts with MTM1. Isoform 3 is found as a monomer or homodimer. In terms of processing, may be autophosphorylated. Isoform 1 is preferentially expressed in striated muscle. Non-kinase form such as isoform 3 is predominantly expressed in the aorta. Isoform 3 appears to be expressed only in highly differentiated ASMC in normal vessel walls and down-regulated in dedifferentiated ASMC in vivo. In response to vascular injuries ASMC dedifferentiate and change from a quiescent and contractile phenotype to a proliferative and synthetic phenotype. This proliferation of vascular smooth muscle cells is one of the most prominent features of atherosclerosis. Isoform 1 and isoform 4 are expressed in cardiomyocytes of the developing heart.

It localises to the nucleus. It catalyses the reaction L-seryl-[protein] + ATP = O-phospho-L-seryl-[protein] + ADP + H(+). The catalysed reaction is L-threonyl-[protein] + ATP = O-phospho-L-threonyl-[protein] + ADP + H(+). In terms of biological role, isoform 3 may have a role in regulating the growth and differentiation of arterial smooth muscle cells. The protein is Striated muscle-specific serine/threonine-protein kinase (Speg) of Mus musculus (Mouse).